The following is a 306-amino-acid chain: uncharacterized protein (306 aa).

The segment at 287–306 is disordered; the sequence is DEEGKSEDAKRQEEEKKKSS.

It belongs to the aldo/keto reductase family.

Its subcellular location is the cytoplasm. The protein resides in the nucleus. This is an uncharacterized protein from Schizosaccharomyces pombe (strain 972 / ATCC 24843) (Fission yeast).